The sequence spans 503 residues: Probable cytosol aminopeptidase (503 aa).

The Mn(2+) site is built by Lys270 and Asp275. Lys282 is an active-site residue. Residues Asp293, Asp352, and Glu354 each contribute to the Mn(2+) site. Residue Arg356 is part of the active site.

The protein belongs to the peptidase M17 family. The cofactor is Mn(2+).

The protein resides in the cytoplasm. It carries out the reaction Release of an N-terminal amino acid, Xaa-|-Yaa-, in which Xaa is preferably Leu, but may be other amino acids including Pro although not Arg or Lys, and Yaa may be Pro. Amino acid amides and methyl esters are also readily hydrolyzed, but rates on arylamides are exceedingly low.. The enzyme catalyses Release of an N-terminal amino acid, preferentially leucine, but not glutamic or aspartic acids.. Its function is as follows. Presumably involved in the processing and regular turnover of intracellular proteins. Catalyzes the removal of unsubstituted N-terminal amino acids from various peptides. This is Probable cytosol aminopeptidase from Enterobacter sp. (strain 638).